Consider the following 423-residue polypeptide: Serine--tRNA ligase (423 aa).

Position 229–231 (229–231) interacts with L-serine; the sequence is TAE. An ATP-binding site is contributed by 258–260; that stretch reads RRE. Glutamate 281 provides a ligand contact to L-serine. 345–348 is a binding site for ATP; sequence EISS. Serine 379 contacts L-serine.

This sequence belongs to the class-II aminoacyl-tRNA synthetase family. Type-1 seryl-tRNA synthetase subfamily. Homodimer. The tRNA molecule binds across the dimer.

It is found in the cytoplasm. It carries out the reaction tRNA(Ser) + L-serine + ATP = L-seryl-tRNA(Ser) + AMP + diphosphate + H(+). The catalysed reaction is tRNA(Sec) + L-serine + ATP = L-seryl-tRNA(Sec) + AMP + diphosphate + H(+). It functions in the pathway aminoacyl-tRNA biosynthesis; selenocysteinyl-tRNA(Sec) biosynthesis; L-seryl-tRNA(Sec) from L-serine and tRNA(Sec): step 1/1. Catalyzes the attachment of serine to tRNA(Ser). Is also able to aminoacylate tRNA(Sec) with serine, to form the misacylated tRNA L-seryl-tRNA(Sec), which will be further converted into selenocysteinyl-tRNA(Sec). This is Serine--tRNA ligase (serS1) from Methanosarcina barkeri (strain Fusaro / DSM 804).